A 113-amino-acid chain; its full sequence is Photosystem II reaction center Psb28 protein (113 aa).

This sequence belongs to the Psb28 family. Part of the photosystem II complex.

The protein resides in the cellular thylakoid membrane. This Trichodesmium erythraeum (strain IMS101) protein is Photosystem II reaction center Psb28 protein.